Consider the following 310-residue polypeptide: Inner membrane protein YfdC (310 aa).

The segment covering 1–12 (MDNDKIDQHSDE) has biased composition (basic and acidic residues). A disordered region spans residues 1-27 (MDNDKIDQHSDEIEVESEEKERGKKIE). The Cytoplasmic segment spans residues 1-58 (MDNDKIDQHSDEIEVESEEKERGKKIEIDEDRLPSRAMAIHEHIRQDGEKELERDAMA). Residues 59–81 (LLWSAIAAGLSMGASLLAKGIFQ) form a helical membrane-spanning segment. Residues 82–90 (VELEGVPGS) lie on the Periplasmic side of the membrane. A helical transmembrane segment spans residues 91 to 113 (FLLENLGYTFGFIIVIMARQQLF). The Cytoplasmic portion of the chain corresponds to 114–133 (TENTVTAVLPVMQKPTMSNV). A helical transmembrane segment spans residues 134-156 (GLLIRLWGVVLLGNILGTGIAAW). Residues 157-186 (AFEYMPIFNEETRDAFVKIGMDVMKNTPSE) are Periplasmic-facing. A helical membrane pass occupies residues 187–206 (MFANAIISGWLIATMVWMFP). Over 207 to 212 (AAGAAK) the chain is Cytoplasmic. Residues 213 to 232 (IVVIILMTWLIALGDTTHIV) traverse the membrane as a helical segment. Residues 233-251 (VGSVEILYLVFNGTLHWSD) lie on the Periplasmic side of the membrane. Residues 252–274 (FIWPFALPTLAGNICGGTFIFAL) traverse the membrane as a helical segment. Topologically, residues 275–310 (MSHAQIRNDMSNKRKAEARQKAERAENIKKNYKNPA) are cytoplasmic. Positions 291–303 (EARQKAERAENIK) are enriched in basic and acidic residues. Residues 291-310 (EARQKAERAENIKKNYKNPA) are disordered.

The protein localises to the cell inner membrane. This Escherichia coli (strain K12) protein is Inner membrane protein YfdC (yfdC).